Consider the following 60-residue polypeptide: Large ribosomal subunit protein bL32 (60 aa).

The span at Met1–Arg16 shows a compositional bias: basic residues. The disordered stretch occupies residues Met1 to Ser60. Residues Val28–Leu44 are compositionally biased toward basic and acidic residues.

This sequence belongs to the bacterial ribosomal protein bL32 family.

The protein is Large ribosomal subunit protein bL32 of Mesorhizobium japonicum (strain LMG 29417 / CECT 9101 / MAFF 303099) (Mesorhizobium loti (strain MAFF 303099)).